Consider the following 103-residue polypeptide: uncharacterized protein (103 aa).

A signal peptide spans 1–13; that stretch reads MLLSSIVSFVADA. An N-linked (GlcNAc...) asparagine glycan is attached at Asn67. The segment at 73 to 103 is disordered; sequence LSSDSNRNIIDNSNNNQHPSSSSTSTSWKKF.

It is found in the secreted. This is an uncharacterized protein from Dictyostelium discoideum (Social amoeba).